The chain runs to 143 residues: Large ribosomal subunit protein uL11 (143 aa).

Belongs to the universal ribosomal protein uL11 family. As to quaternary structure, part of the ribosomal stalk of the 50S ribosomal subunit. Interacts with L10 and the large rRNA to form the base of the stalk. L10 forms an elongated spine to which L12 dimers bind in a sequential fashion forming a multimeric L10(L12)X complex. In terms of processing, one or more lysine residues are methylated.

In terms of biological role, forms part of the ribosomal stalk which helps the ribosome interact with GTP-bound translation factors. This chain is Large ribosomal subunit protein uL11, found in Treponema denticola (strain ATCC 35405 / DSM 14222 / CIP 103919 / JCM 8153 / KCTC 15104).